The sequence spans 885 residues: MENPQKPRELTRAFNHYNKHSGFLKKNLKETILFFREIRQNHSNTCAAAEPGQLSCISFPRQDEEYLQNVVSSAPYILILGQDCSARYQLLNCLLGERLLPLGPEAGGACGAEGGACRRRKLCFTHGRQTRLSLALPGQYELVHQLAAHCGRWDTVPRQDLEIQECEDPAQRLAELEITLHHTLLQEVKIMVLPCRNVQPLEEALEDCKRGILPIVLYAVSRESLSAQQLEDLQTLRESLPFPVCFIRVSDGGGGGALFTQLASLQLISASAGNCACGAPAAQSAGRMQGVLCDSLERLQRVLVPFTRQVLQNQQVEAATLLNTIHCRCLDLFIIQAFDMQRDLQITPRRLEYTREKEGELFCSLMAIANRKQEEMKEMIVETLSSMKEQLLEDAQNLDFTDIIMSSNGEPVSSKDIKVCISQIQDLIVNRLNQAVANKLTNSVDYLRESFVGTLERCLGSLEKSTPESCAHNVTSNHLKQILNAAYHVEVTFHSGSSVTRLFWEQIKQIIHRITWVNPPAITAEWKRKVAQDAIESLSAAKLAKSICSQFRTRLNSSHEAFAASLRQLEEGHTGRLERTEDLWLRVRKDHAPRLARLSLESRSLRDILLHGKPKLGRELGRGQYGVVYLCDSWAGRHPCALKSVVPPDDKHWNDLALEFHYTRSLPKHERLVNLHGSVIDHSYSGGSSIAVLLIMERLHRDLYTGLKAGLSLKERLLIALDVVEGIRFLHSQGLLHRDIKLKNVLLDKQNRAKITDLGFCKPEAMMSGSIVGTPIHMAPELFTGKYDNSVDVYAFGILFWYLCSGSVKLPEAFEKCASKDQLWTNVKKGCRPERLPVFDEECWQLMEACWNGDPSQRPLLGIVQPGLQSIMERLCGEKSLEDSN.

Residues 614–868 form the Protein kinase domain; that stretch reads PKLGRELGRG…PLLGIVQPGL (255 aa). ATP is bound by residues 620-628 and lysine 643; that span reads LGRGQYGVV. The Proton acceptor role is filled by aspartate 739.

It belongs to the protein kinase superfamily. Ser/Thr protein kinase family.

It is found in the cytoplasm. It localises to the cell membrane. The protein localises to the apical cell membrane. Its subcellular location is the basolateral cell membrane. The protein resides in the cell junction. It catalyses the reaction L-seryl-[protein] + ATP = O-phospho-L-seryl-[protein] + ADP + H(+). The enzyme catalyses L-threonyl-[protein] + ATP = O-phospho-L-threonyl-[protein] + ADP + H(+). The catalysed reaction is L-tyrosyl-[protein] + ATP = O-phospho-L-tyrosyl-[protein] + ADP + H(+). May act as a positive regulator of ERK phosphorylation downstream of fibroblast growth factor-receptor activation. May induce both caspase-dependent apoptosis and caspase-independent cell death. Plays a role in the embryonic development. The polypeptide is Dual serine/threonine and tyrosine protein kinase (dstyk) (Danio rerio (Zebrafish)).